Reading from the N-terminus, the 294-residue chain is Large ribosomal subunit protein uL18B (294 aa).

Belongs to the universal ribosomal protein uL18 family. In terms of assembly, component of the large ribosomal subunit (LSU). Mature yeast ribosomes consist of a small (40S) and a large (60S) subunit. The 40S small subunit contains 1 molecule of ribosomal RNA (18S rRNA) and 33 different proteins (encoded by 57 genes). The large 60S subunit contains 3 rRNA molecules (25S, 5.8S and 5S rRNA) and 46 different proteins (encoded by 81 genes). Component of a hexameric 5S RNP precursor complex, composed of 5S RNA, rrs1, rpf2, rpl5a/rpl5b, rpl11a/rpl11b and syo1; this complex acts as a precursor for ribosome assembly. rpl5a/rpl5b/uL18 forms a heterotrimeric complex with syo1 and rpl11a/rpl11b/uL5. Interaction of this complex with KAP104 allows the nuclear import of the heterotrimer.

The protein localises to the cytoplasm. It localises to the nucleus. Functionally, component of the ribosome, a large ribonucleoprotein complex responsible for the synthesis of proteins in the cell. The small ribosomal subunit (SSU) binds messenger RNAs (mRNAs) and translates the encoded message by selecting cognate aminoacyl-transfer RNA (tRNA) molecules. The large subunit (LSU) contains the ribosomal catalytic site termed the peptidyl transferase center (PTC), which catalyzes the formation of peptide bonds, thereby polymerizing the amino acids delivered by tRNAs into a polypeptide chain. The nascent polypeptides leave the ribosome through a tunnel in the LSU and interact with protein factors that function in enzymatic processing, targeting, and the membrane insertion of nascent chains at the exit of the ribosomal tunnel. The polypeptide is Large ribosomal subunit protein uL18B (rpl502) (Schizosaccharomyces pombe (strain 972 / ATCC 24843) (Fission yeast)).